Reading from the N-terminus, the 137-residue chain is Large ribosomal subunit protein uL16 (137 aa).

It belongs to the universal ribosomal protein uL16 family. Part of the 50S ribosomal subunit.

In terms of biological role, binds 23S rRNA and is also seen to make contacts with the A and possibly P site tRNAs. The sequence is that of Large ribosomal subunit protein uL16 from Wolbachia sp. subsp. Brugia malayi (strain TRS).